The sequence spans 448 residues: Phosphoglucosamine mutase (448 aa).

The active-site Phosphoserine intermediate is Ser100. Mg(2+) is bound by residues Ser100, Asp240, Asp242, and Asp244. Ser100 is subject to Phosphoserine.

This sequence belongs to the phosphohexose mutase family. The cofactor is Mg(2+). Activated by phosphorylation.

It carries out the reaction alpha-D-glucosamine 1-phosphate = D-glucosamine 6-phosphate. Its function is as follows. Catalyzes the conversion of glucosamine-6-phosphate to glucosamine-1-phosphate. This is Phosphoglucosamine mutase from Bacillus licheniformis (strain ATCC 14580 / DSM 13 / JCM 2505 / CCUG 7422 / NBRC 12200 / NCIMB 9375 / NCTC 10341 / NRRL NRS-1264 / Gibson 46).